The following is an 848-amino-acid chain: Adenylate cyclase (848 aa).

Residues 1-535 (MYLYIETLKQ…DVSHHFPLRL (535 aa)) form a catalytic region. The tract at residues 541-848 (KALYSPCEIR…DAPLLQQYFS (308 aa)) is regulatory. His609 is subject to Phosphohistidine; by CRR.

This sequence belongs to the adenylyl cyclase class-1 family.

It localises to the cytoplasm. It carries out the reaction ATP = 3',5'-cyclic AMP + diphosphate. The protein is Adenylate cyclase (cyaA) of Escherichia coli O6:H1 (strain CFT073 / ATCC 700928 / UPEC).